A 150-amino-acid polypeptide reads, in one-letter code: Monooxygenase dmxR10 (150 aa).

This sequence belongs to the avfA family.

Its pathway is secondary metabolite biosynthesis. Its function is as follows. Monooxygenase; part of the gene cluster that mediates the biosynthesis of the dimeric xanthones cryptosporioptides. The pathway begins with the synthesis of atrochrysone thioester by the polyketide synthase dmx-nrPKS. The atrochrysone carboxyl ACP thioesterase dmxR1 then breaks the thioester bond and releases the atrochrysone carboxylic acid from dmx-nrPKS. Atrochrysone carboxylic acid is decarboxylated by the decarboxylase dmxR15, and oxidized by the anthrone oxygenase dmxR16 to yield emodin. Emodin is then reduced to emodin hydroquinone by the oxidoreductase dmxR7. A-ring reduction by the short chain dehydrogenase dmxR18, dehydration by the scytalone dehydratase-like protein dmxR17 and probable spontaneous re-oxidation, results in overall deoxygenation to chrysophanol. Baeyer-Villiger oxidation by the Baeyer-Villiger monooxygenase (BVMO) dmxR6 then yields monodictylactone in equilibrium with monodictyphenone. In the case of the cryptosporioptides biosynthesis, monodictylactone is reduced at C-12 to an alcohol (by the short chain dehydrogenases dmxR12 or dmxR8) and hydroxylated at C-5 by dmxR9, yielding the electron-rich aromatic which could eliminate H(2)O to form the ortho-quinonemethide, followed by tautomerisation to paraquinone and complete the formal reduction to produce the 10-methylgroup. Conjugate addition of C-4a-OH to the resulting paraquinone by the monooxygenase dmxR10 then gives cyclohexadienone, which is then reduced at C-5 by the short chain dehydrogenase dmxR3 to give the dihydroxanthone. The 6,7-epoxide in the cryptosporioptides could be introduced by the cytochrome P450 monooxygenase dmxL3. The highly reducing PKS dmxL2 manufactures butyrate, which is further carboxylated by dmxL1 to form ethylmalonate. It is not yet clear whether the carboxylation occurs while the butyrate is attached to the ACP of dmxL2, but this unusual fungal metabolite could then be esterified to O-5 by the O-acetyltransferase dmxR13. Finally, dimerization performed by dmxR5 gives the observed dimers cryptosporioptides A, B and C as the final products of the pathway. The sequence is that of Monooxygenase dmxR10 from Cryptosporiopsis sp. (strain 8999).